Consider the following 142-residue polypeptide: Putative pre-16S rRNA nuclease (142 aa).

It belongs to the YqgF nuclease family.

It localises to the cytoplasm. Could be a nuclease involved in processing of the 5'-end of pre-16S rRNA. This is Putative pre-16S rRNA nuclease from Chlorobaculum tepidum (strain ATCC 49652 / DSM 12025 / NBRC 103806 / TLS) (Chlorobium tepidum).